The sequence spans 504 residues: ATP synthase subunit alpha (504 aa).

G170–T177 is an ATP binding site.

Belongs to the ATPase alpha/beta chains family. F-type ATPases have 2 components, CF(1) - the catalytic core - and CF(0) - the membrane proton channel. CF(1) has five subunits: alpha(3), beta(3), gamma(1), delta(1), epsilon(1). CF(0) has four main subunits: a, b, b' and c.

It localises to the cellular thylakoid membrane. The enzyme catalyses ATP + H2O + 4 H(+)(in) = ADP + phosphate + 5 H(+)(out). In terms of biological role, produces ATP from ADP in the presence of a proton gradient across the membrane. The alpha chain is a regulatory subunit. This is ATP synthase subunit alpha from Prochlorococcus marinus (strain MIT 9211).